Reading from the N-terminus, the 538-residue chain is Cytochrome P450 monooxygenase okaG (538 aa).

A helical transmembrane segment spans residues 3–23 (LISPLAAVLSAMAIVLGLLFF). Residue cysteine 484 participates in heme binding.

This sequence belongs to the cytochrome P450 family. Requires heme as cofactor.

It localises to the membrane. It carries out the reaction 12-deshydroxyl okaramine E + 2 reduced [NADPH--hemoprotein reductase] + 2 O2 = 3-desmethyl okaramine B + 2 oxidized [NADPH--hemoprotein reductase] + 2 H2O + 2 H(+). The protein operates within alkaloid biosynthesis. Functionally, nonribosomal peptide synthetase; part of the gene cluster that mediates the biosynthesis of okaramine B, a prenylated indole alkaloid that possesses an unusual octacyclic ring system, including a four-membered azetidine ring and an eight-membered azocine ring, and that exhibits insecticidal activity against silkworm larvae. Within the pathway, okaG acts as a 2,3-diol synthase that installs 2,3-diol on the okaramine scaffold to convert 12-deshydroxyl okaramine E into 3-desmethyl okaramine B. OkaG is also able to produce use okaramine E and produce okaramine D with the help of the methyltransferase okaF. The biosynthesis begins with the NRPS okaA that condenses two tryptophan molecules into cyclo(L-Trp-L-Trp). Prenylation by the prenyltransferase okaC then leads to the formation of cyclo(N8-(alpha,alpha-dimethylallyl)-L-Trp-6a-(alpha,alpha-dime-thylallyl)-L-Trp). This is followed by indole 2,3-epoxidation by the FAD-dependent monooxygenase okaB to facilitate the formation of the hexahydropyrrolo[2,3-b]indole (HPI) moiety of okaramine C. The cytochrome P450 monooxygenase okaD then likely catalyzes formation of the eight-membered ring of okaramine A. The dioxygenase okaE further forms the unusual 2-dimethyl-3-methyl-azetidine ring to yield 12-deshydroxyl okaramine E, as well as the hydroxylation of 12-deshydroxyl okaramine E to produce okaramine E. The cytochrome P450 monoxygenase okaG converts 12-deshydroxyl okaramine E into 3-desmethyl okaramine B which is further methylated by the methyltransferase okaF into okaramine B. In a shunt pathway, okaG and okaF together are also able to convert okaramine E into okaramine D. Okaramine H is produced by nonenzymatic conversion from okaramine A. The polypeptide is Cytochrome P450 monooxygenase okaG (Penicillium ochrochloron).